We begin with the raw amino-acid sequence, 1487 residues long: Chromosome partition protein MukB (1487 aa).

Glycine 34–serine 41 provides a ligand contact to ATP. Coiled-coil stretches lie at residues serine 297–alanine 426, alanine 460–serine 666, arginine 781–alanine 806, glutamate 836–valine 1111, and valine 1210–isoleucine 1266. Residues proline 667–arginine 784 form a flexible hinge region.

Belongs to the SMC family. MukB subfamily. Homodimerization via its hinge domain. Binds to DNA via its C-terminal region. Interacts, and probably forms a ternary complex, with MukE and MukF via its C-terminal region. The complex formation is stimulated by calcium or magnesium. Interacts with tubulin-related protein FtsZ.

It localises to the cytoplasm. The protein localises to the nucleoid. Plays a central role in chromosome condensation, segregation and cell cycle progression. Functions as a homodimer, which is essential for chromosome partition. Involved in negative DNA supercoiling in vivo, and by this means organize and compact chromosomes. May achieve or facilitate chromosome segregation by condensation DNA from both sides of a centrally located replisome during cell division. The chain is Chromosome partition protein MukB from Vibrio vulnificus (strain CMCP6).